Here is a 245-residue protein sequence, read N- to C-terminus: Thiopurine S-methyltransferase (245 aa).

Residue 29-40 (WREKWVDGKIGF) coordinates S-adenosyl-L-methionine. F40 contributes to the substrate binding site. An N6-acetyllysine modification is found at K58. The S-adenosyl-L-methionine site is built by L69, E90, and R152.

Belongs to the class I-like SAM-binding methyltransferase superfamily. TPMT family. In terms of assembly, monomer.

It is found in the cytoplasm. The catalysed reaction is S-adenosyl-L-methionine + a thiopurine = S-adenosyl-L-homocysteine + a thiopurine S-methylether.. The polypeptide is Thiopurine S-methyltransferase (TPMT) (Panthera leo (Lion)).